The chain runs to 98 residues: MSVSIKPLEDRIVVRQLDAEQTTASGLVIPDSAKEKPQEGEVVAVGPGRVDDNGNRVPVDVAVGDVVLYSKYGGTEVKTGGEELLVLSARDVLAIVVK.

The protein belongs to the GroES chaperonin family. In terms of assembly, heptamer of 7 subunits arranged in a ring. Interacts with the chaperonin GroEL.

It localises to the cytoplasm. Functionally, together with the chaperonin GroEL, plays an essential role in assisting protein folding. The GroEL-GroES system forms a nano-cage that allows encapsulation of the non-native substrate proteins and provides a physical environment optimized to promote and accelerate protein folding. GroES binds to the apical surface of the GroEL ring, thereby capping the opening of the GroEL channel. The sequence is that of Co-chaperonin GroES from Renibacterium salmoninarum (strain ATCC 33209 / DSM 20767 / JCM 11484 / NBRC 15589 / NCIMB 2235).